The following is a 349-amino-acid chain: Dihydroorotase (349 aa).

The Zn(2+) site is built by H17 and H19. Substrate contacts are provided by residues 19-21 (HLR) and N45. Positions 103, 140, and 178 each coordinate Zn(2+). An N6-carboxylysine modification is found at K103. H140 provides a ligand contact to substrate. L224 is a substrate binding site. D252 serves as a coordination point for Zn(2+). D252 is a catalytic residue. Substrate-binding residues include H256 and A268.

This sequence belongs to the metallo-dependent hydrolases superfamily. DHOase family. Class II DHOase subfamily. As to quaternary structure, homodimer. It depends on Zn(2+) as a cofactor.

The enzyme catalyses (S)-dihydroorotate + H2O = N-carbamoyl-L-aspartate + H(+). Its pathway is pyrimidine metabolism; UMP biosynthesis via de novo pathway; (S)-dihydroorotate from bicarbonate: step 3/3. Its function is as follows. Catalyzes the reversible cyclization of carbamoyl aspartate to dihydroorotate. The polypeptide is Dihydroorotase (Buchnera aphidicola subsp. Schizaphis graminum (strain Sg)).